Consider the following 150-residue polypeptide: MTITQVKVKKLDNFFGKLPEYATDHSAGMDLTAANEQPITIKAGEIQLIPTGIAIALPELFEAQIRPRSGLAAKNGITVANSPGTIDADYRGEIKVILINLGKDDFVIEKGMRIAQMVISKYERISWKESETLEETARGSGGFGSTGVYL.

Substrate-binding positions include 68–70 (RSG), N81, 85–87 (TID), and K95.

This sequence belongs to the dUTPase family. The cofactor is Mg(2+).

The catalysed reaction is dUTP + H2O = dUMP + diphosphate + H(+). Its pathway is pyrimidine metabolism; dUMP biosynthesis; dUMP from dCTP (dUTP route): step 2/2. In terms of biological role, this enzyme is involved in nucleotide metabolism: it produces dUMP, the immediate precursor of thymidine nucleotides and it decreases the intracellular concentration of dUTP so that uracil cannot be incorporated into DNA. The chain is Deoxyuridine 5'-triphosphate nucleotidohydrolase from Rickettsia bellii (strain OSU 85-389).